We begin with the raw amino-acid sequence, 512 residues long: MGATVADLQATNGTAQAQAKHGVSDGRVVAVRGAVVDVAFDGGVLPALNDALVIPIDGAAPILAEVHAHLSDAAVRALALGPTGGLRRGAAVRATGGPIRVPVGDAVLGRLLSVTGEPGDDGAALAADVARRPIHRGAPPLAEQKSATALFATGIKVIDLLAPLAQGGKAAMFGGAGVGKTVLVMELIHAMVERYRGISVFAGIGERSREGHEMLLDMRGSGVLGRTVLVYGQMNEPPGARWRVPLTALAIAEYFRDERAQNVLLLMDNVFRFVQAGAEVSGLLGRLPSRVGYQPTLASEVAALQERIASVEGAAVTAIEAVYVPADDFTDPAVTAIAAHVDSMVVLSRAMAAEGMYPAIDPVASSSILLDPLVVGEAHVEVAIEVRRVIEHYRELQDVIALLGIDELGADDRRIVGRARRLQRFLTQPFAVTEAFTGQAGASVEIADTIAGCRAILRGDCDDWRESSLYMVGTLDDARRKEEAAREADARRDAAAGAASGSAGPQGAQHGR.

An ATP-binding site is contributed by 174–181; sequence GGAGVGKT. Over residues 479-494 the composition is skewed to basic and acidic residues; that stretch reads RRKEEAAREADARRDA. The tract at residues 479 to 512 is disordered; sequence RRKEEAAREADARRDAAAGAASGSAGPQGAQHGR.

It belongs to the ATPase alpha/beta chains family. F-type ATPases have 2 components, CF(1) - the catalytic core - and CF(0) - the membrane proton channel. CF(1) has five subunits: alpha(3), beta(3), gamma(1), delta(1), epsilon(1). CF(0) has three main subunits: a(1), b(2) and c(9-12). The alpha and beta chains form an alternating ring which encloses part of the gamma chain. CF(1) is attached to CF(0) by a central stalk formed by the gamma and epsilon chains, while a peripheral stalk is formed by the delta and b chains.

It localises to the cell inner membrane. The enzyme catalyses ATP + H2O + 4 H(+)(in) = ADP + phosphate + 5 H(+)(out). Its function is as follows. Produces ATP from ADP in the presence of a proton gradient across the membrane. The catalytic sites are hosted primarily by the beta subunits. The sequence is that of ATP synthase subunit beta 2 from Burkholderia thailandensis (strain ATCC 700388 / DSM 13276 / CCUG 48851 / CIP 106301 / E264).